We begin with the raw amino-acid sequence, 174 residues long: FMN reductase (NADH) RutF (174 aa).

It belongs to the non-flavoprotein flavin reductase family. RutF subfamily.

It carries out the reaction FMNH2 + NAD(+) = FMN + NADH + 2 H(+). In terms of biological role, catalyzes the reduction of FMN to FMNH2 which is used to reduce pyrimidine by RutA via the Rut pathway. The sequence is that of FMN reductase (NADH) RutF from Stutzerimonas stutzeri (strain A1501) (Pseudomonas stutzeri).